The sequence spans 39 residues: Cytochrome b6-f complex subunit 5 (39 aa).

Residues 5–25 (LLCGIVLGLVPITIVGLFVSA) traverse the membrane as a helical segment.

It belongs to the PetG family. As to quaternary structure, the 4 large subunits of the cytochrome b6-f complex are cytochrome b6, subunit IV (17 kDa polypeptide, PetD), cytochrome f and the Rieske protein, while the 4 small subunits are PetG, PetL, PetM and PetN. The complex functions as a dimer.

Its subcellular location is the cellular thylakoid membrane. Functionally, component of the cytochrome b6-f complex, which mediates electron transfer between photosystem II (PSII) and photosystem I (PSI), cyclic electron flow around PSI, and state transitions. PetG is required for either the stability or assembly of the cytochrome b6-f complex. This chain is Cytochrome b6-f complex subunit 5, found in Prochlorococcus marinus (strain MIT 9211).